A 154-amino-acid chain; its full sequence is Pro-corazonin (154 aa).

Positions 1–19 (MLRLLLLPLFLFTLSMCMG) are cleaved as a signal peptide. Gln20 bears the Pyrrolidone carboxylic acid mark. Asn30 is subject to Asparagine amide. The propeptide occupies 70–154 (LERCLSQLQR…SAEPNVFGKH (85 aa)).

Belongs to the corazonin family. In terms of tissue distribution, expression is restricted to 24 neurons in the larval CNS (8 in the brain and 16 in the ventral nerve cord) and 12-16 neurons in the pars lateralis of the adult brain.

The protein localises to the secreted. In terms of biological role, cardioactive peptide. Corazonin is probably involved in the physiological regulation of the heart beat. Clock (Clk) and cycle (cyc) proteins negatively regulate Crz transcription in a cell-specific manner. The polypeptide is Pro-corazonin (Crz) (Drosophila simulans (Fruit fly)).